A 498-amino-acid polypeptide reads, in one-letter code: ATP synthase subunit beta, chloroplastic (498 aa).

Residue G172–T179 coordinates ATP.

It belongs to the ATPase alpha/beta chains family. As to quaternary structure, F-type ATPases have 2 components, CF(1) - the catalytic core - and CF(0) - the membrane proton channel. CF(1) has five subunits: alpha(3), beta(3), gamma(1), delta(1), epsilon(1). CF(0) has four main subunits: a(1), b(1), b'(1) and c(9-12).

It localises to the plastid. The protein resides in the chloroplast thylakoid membrane. It catalyses the reaction ATP + H2O + 4 H(+)(in) = ADP + phosphate + 5 H(+)(out). Functionally, produces ATP from ADP in the presence of a proton gradient across the membrane. The catalytic sites are hosted primarily by the beta subunits. The sequence is that of ATP synthase subunit beta, chloroplastic from Agrostis stolonifera (Creeping bentgrass).